A 376-amino-acid chain; its full sequence is Carbamoyl phosphate synthase small chain (376 aa).

Residues 1-183 form a CPSase region; that stretch reads MSKAVLVLED…PDGPPGVSRF (183 aa). L-glutamine-binding residues include S46, G232, and G234. The Glutamine amidotransferase type-1 domain occupies 184 to 376; sequence TVAALDLGIK…FVELMAGEGR (193 aa). The active-site Nucleophile is the C260. 5 residues coordinate L-glutamine: F261, Q264, N302, G304, and F305. Residues H350 and E352 contribute to the active site.

The protein belongs to the CarA family. As to quaternary structure, composed of two chains; the small (or glutamine) chain promotes the hydrolysis of glutamine to ammonia, which is used by the large (or ammonia) chain to synthesize carbamoyl phosphate. Tetramer of heterodimers (alpha,beta)4.

It carries out the reaction hydrogencarbonate + L-glutamine + 2 ATP + H2O = carbamoyl phosphate + L-glutamate + 2 ADP + phosphate + 2 H(+). The catalysed reaction is L-glutamine + H2O = L-glutamate + NH4(+). Its pathway is amino-acid biosynthesis; L-arginine biosynthesis; carbamoyl phosphate from bicarbonate: step 1/1. It participates in pyrimidine metabolism; UMP biosynthesis via de novo pathway; (S)-dihydroorotate from bicarbonate: step 1/3. Functionally, small subunit of the glutamine-dependent carbamoyl phosphate synthetase (CPSase). CPSase catalyzes the formation of carbamoyl phosphate from the ammonia moiety of glutamine, carbonate, and phosphate donated by ATP, constituting the first step of 2 biosynthetic pathways, one leading to arginine and/or urea and the other to pyrimidine nucleotides. The small subunit (glutamine amidotransferase) binds and cleaves glutamine to supply the large subunit with the substrate ammonia. The chain is Carbamoyl phosphate synthase small chain from Mycobacterium bovis (strain ATCC BAA-935 / AF2122/97).